The following is a 244-amino-acid chain: 5-oxoprolinase subunit A (244 aa).

It belongs to the LamB/PxpA family. In terms of assembly, forms a complex composed of PxpA, PxpB and PxpC.

The catalysed reaction is 5-oxo-L-proline + ATP + 2 H2O = L-glutamate + ADP + phosphate + H(+). In terms of biological role, catalyzes the cleavage of 5-oxoproline to form L-glutamate coupled to the hydrolysis of ATP to ADP and inorganic phosphate. This Escherichia coli (strain SMS-3-5 / SECEC) protein is 5-oxoprolinase subunit A.